Reading from the N-terminus, the 186-residue chain is Protein FAM219A (186 aa).

Disordered stretches follow at residues 1-47 and 59-132; these read MMEE…NYKP and ELAR…GYSS. Residues 67–81 show a composition bias toward polar residues; sequence KNGTVGSPVNQQPKK. The span at 123-132 shows a compositional bias: low complexity; the sequence is SRYSSSGYSS.

The protein belongs to the FAM219 family.

The polypeptide is Protein FAM219A (fam219a) (Danio rerio (Zebrafish)).